We begin with the raw amino-acid sequence, 371 residues long: N-acetyldiaminopimelate deacetylase (371 aa).

The active site involves D68. E127 acts as the Proton acceptor in catalysis.

It belongs to the peptidase M20A family. N-acetyldiaminopimelate deacetylase subfamily.

The enzyme catalyses N-acetyl-(2S,6S)-2,6-diaminopimelate + H2O = (2S,6S)-2,6-diaminopimelate + acetate. It participates in amino-acid biosynthesis; L-lysine biosynthesis via DAP pathway; LL-2,6-diaminopimelate from (S)-tetrahydrodipicolinate (acetylase route): step 3/3. Catalyzes the conversion of N-acetyl-diaminopimelate to diaminopimelate and acetate. The chain is N-acetyldiaminopimelate deacetylase from Listeria monocytogenes serovar 1/2a (strain ATCC BAA-679 / EGD-e).